We begin with the raw amino-acid sequence, 592 residues long: Aspartate--tRNA ligase (592 aa).

Glu-173 contacts L-aspartate. Residues 197–200 (QLFK) are aspartate. Arg-219 contributes to the L-aspartate binding site. Residues 219–221 (RDE) and Gln-228 each bind ATP. Residue His-448 coordinates L-aspartate. An ATP-binding site is contributed by Glu-482. Arg-489 contacts L-aspartate. 534 to 537 (GLDR) contacts ATP.

The protein belongs to the class-II aminoacyl-tRNA synthetase family. Type 1 subfamily. In terms of assembly, homodimer.

Its subcellular location is the cytoplasm. The catalysed reaction is tRNA(Asp) + L-aspartate + ATP = L-aspartyl-tRNA(Asp) + AMP + diphosphate. In terms of biological role, catalyzes the attachment of L-aspartate to tRNA(Asp) in a two-step reaction: L-aspartate is first activated by ATP to form Asp-AMP and then transferred to the acceptor end of tRNA(Asp). This chain is Aspartate--tRNA ligase, found in Shewanella baltica (strain OS223).